The following is a 902-amino-acid chain: Protein NrfI (902 aa).

Transmembrane regions (helical) follow at residues 9-29 (YITLTLLFLLLAVGAAIATFI), 75-95 (FLFHIAFVVILLGAGLTRYLG), 300-320 (VTYLGYALLFLGLLWNLLDPT), 335-355 (LSLLLPLCLLSPLASSLYAQS), 602-622 (LVLGFLVLLSAFGLLFFPPLA), 659-679 (DTYESMLYISWSGMLGALLFF), 731-751 (SYGFFGVGAFLGSFALALFIL), 772-792 (VSLILGLTLLVIGNFLGGIWA), 832-852 (YLFSLLSLWGFGSILMTYFGV), and 868-888 (LPIPLWVYALSLALALLSLIA).

In the C-terminal section; belongs to the CcmF/CycK/Ccl1/NrfE/CcsA family.

Its subcellular location is the cell membrane. May play a role in cytochrome c biogenesis and may be required for maturation of the NrfA protein. In Wolinella succinogenes (strain ATCC 29543 / DSM 1740 / CCUG 13145 / JCM 31913 / LMG 7466 / NCTC 11488 / FDC 602W) (Vibrio succinogenes), this protein is Protein NrfI (nrfI).